Here is a 270-residue protein sequence, read N- to C-terminus: 1-deoxy-11-beta-hydroxypentalenate dehydrogenase (270 aa).

An NAD(+)-binding site is contributed by Gly12–Asp36. Position 144 (Ser144) interacts with substrate. Catalysis depends on Tyr157, which acts as the Proton acceptor. Lys161 contributes to the NAD(+) binding site.

The protein belongs to the short-chain dehydrogenases/reductases (SDR) family.

It catalyses the reaction 1-deoxy-11beta-hydroxypentalenate + NAD(+) = 1-deoxy-11-oxopentalenate + NADH + H(+). It participates in antibiotic biosynthesis; neopentalenolactone biosynthesis. Functionally, catalyzes the oxidation of 1-deoxy-11-beta-hydroxypentalenic acid to 1-deoxy-11-oxopentalenic acid in the biosynthesis of neopentalenolactone antibiotic. This Streptomyces avermitilis (strain ATCC 31267 / DSM 46492 / JCM 5070 / NBRC 14893 / NCIMB 12804 / NRRL 8165 / MA-4680) protein is 1-deoxy-11-beta-hydroxypentalenate dehydrogenase (ptlF).